The chain runs to 122 residues: Large ribosomal subunit protein bL12 (122 aa).

Belongs to the bacterial ribosomal protein bL12 family. Homodimer. Part of the ribosomal stalk of the 50S ribosomal subunit. Forms a multimeric L10(L12)X complex, where L10 forms an elongated spine to which 2 to 4 L12 dimers bind in a sequential fashion. Binds GTP-bound translation factors.

Functionally, forms part of the ribosomal stalk which helps the ribosome interact with GTP-bound translation factors. Is thus essential for accurate translation. The protein is Large ribosomal subunit protein bL12 of Deinococcus radiodurans (strain ATCC 13939 / DSM 20539 / JCM 16871 / CCUG 27074 / LMG 4051 / NBRC 15346 / NCIMB 9279 / VKM B-1422 / R1).